The sequence spans 539 residues: Protein peanut (539 aa).

Phosphoserine occurs at positions 6 and 13. Residues 29–90 (LRDKQQAASA…GASNGDSNKL (62 aa)) form a disordered region. A compositionally biased stretch (low complexity) spans 35-54 (AASASASSATNGSSGSESLV). A Septin-type G domain is found at 139 to 411 (RGFEFTLMVV…ENYRCRKLSE (273 aa)). The interval 149-156 (GASGLGKS) is G1 motif. GTP is bound by residues 149 to 156 (GASGLGKS), threonine 183, glycine 209, 288 to 296 (KADTMTPDE), glycine 345, and arginine 360. The tract at residues 206-209 (DTPG) is G3 motif. A G4 motif region spans residues 287-290 (AKAD). Residues 420–516 (RLSNKNPLTQ…HVTLEELKRR (97 aa)) are a coiled coil. Positions 513-539 (LKRRSLGANSSTDNVDGKKEKKKKGLF) are disordered. Serine 517 carries the phosphoserine modification.

The protein belongs to the TRAFAC class TrmE-Era-EngA-EngB-Septin-like GTPase superfamily. Septin GTPase family. Likely part of a multicomponent septin complex that includes Septin1. Interacts with Septin1. Interacts with hil. Interacts with park. In terms of processing, ubiquitinated by park, leading to its degradation by the proteasome. As to expression, accumulates at the leading edge of the cleavage furrow in dividing cells and cellularizing embryos (at protein level).

The protein localises to the apical cell membrane. Its subcellular location is the cleavage furrow. The protein resides in the cytoplasm. It is found in the cell cortex. Functionally, involved in cytokinesis and possibly cellularization. Also acts as an enhancer of the sina gene, thus having a role in photoreceptor development. May be involved in p53-dependent apoptosis. This Drosophila melanogaster (Fruit fly) protein is Protein peanut (pnut).